Reading from the N-terminus, the 366-residue chain is Carbamoyl phosphate synthase small chain (366 aa).

A CPSase region spans residues 1-168 (MYGILVLEDG…KETVVYSADD (168 aa)). Ser-45, Gly-220, and Gly-222 together coordinate L-glutamine. The 192-residue stretch at 172-363 (KCVLIDCGVK…VELGIKFKAE (192 aa)) folds into the Glutamine amidotransferase type-1 domain. Cys-247 (nucleophile) is an active-site residue. Residues Leu-248, Gln-251, Asn-289, Gly-291, and Phe-292 each contribute to the L-glutamine site. Active-site residues include His-336 and Glu-338.

The protein belongs to the CarA family. As to quaternary structure, composed of two chains; the small (or glutamine) chain promotes the hydrolysis of glutamine to ammonia, which is used by the large (or ammonia) chain to synthesize carbamoyl phosphate. Tetramer of heterodimers (alpha,beta)4.

It catalyses the reaction hydrogencarbonate + L-glutamine + 2 ATP + H2O = carbamoyl phosphate + L-glutamate + 2 ADP + phosphate + 2 H(+). The enzyme catalyses L-glutamine + H2O = L-glutamate + NH4(+). It functions in the pathway amino-acid biosynthesis; L-arginine biosynthesis; carbamoyl phosphate from bicarbonate: step 1/1. The protein operates within pyrimidine metabolism; UMP biosynthesis via de novo pathway; (S)-dihydroorotate from bicarbonate: step 1/3. Its function is as follows. Small subunit of the glutamine-dependent carbamoyl phosphate synthetase (CPSase). CPSase catalyzes the formation of carbamoyl phosphate from the ammonia moiety of glutamine, carbonate, and phosphate donated by ATP, constituting the first step of 2 biosynthetic pathways, one leading to arginine and/or urea and the other to pyrimidine nucleotides. The small subunit (glutamine amidotransferase) binds and cleaves glutamine to supply the large subunit with the substrate ammonia. This is Carbamoyl phosphate synthase small chain from Methanococcus maripaludis (strain C6 / ATCC BAA-1332).